Consider the following 227-residue polypeptide: DNA utilization protein YhgH (227 aa).

The protein belongs to the ComF/GntX family.

Its function is as follows. Required for the use of extracellular DNA as a nutrient. Has been suggested to be involved in gluconate metabolism. The protein is DNA utilization protein YhgH of Escherichia coli (strain K12).